The sequence spans 141 residues: Transcription antitermination protein NusB (141 aa).

Belongs to the NusB family.

In terms of biological role, involved in transcription antitermination. Required for transcription of ribosomal RNA (rRNA) genes. Binds specifically to the boxA antiterminator sequence of the ribosomal RNA (rrn) operons. This Neisseria gonorrhoeae (strain ATCC 700825 / FA 1090) protein is Transcription antitermination protein NusB.